Consider the following 113-residue polypeptide: Translation initiation factor IF-1, chloroplastic (113 aa).

The S1-like domain maps to Arg8–Pro83. The interval Asp86–Asp113 is disordered.

This sequence belongs to the IF-1 family. In terms of assembly, component of the 30S ribosomal translation pre-initiation complex which assembles on the 30S ribosome in the order IF-2 and IF-3, IF-1 and N-formylmethionyl-tRNA(fMet); mRNA recruitment can occur at any time during PIC assembly.

The protein localises to the plastid. It localises to the chloroplast. Its function is as follows. One of the essential components for the initiation of protein synthesis. Stabilizes the binding of IF-2 and IF-3 on the 30S subunit to which N-formylmethionyl-tRNA(fMet) subsequently binds. Helps modulate mRNA selection, yielding the 30S pre-initiation complex (PIC). Upon addition of the 50S ribosomal subunit IF-1, IF-2 and IF-3 are released leaving the mature 70S translation initiation complex. The chain is Translation initiation factor IF-1, chloroplastic from Hordeum vulgare (Barley).